Reading from the N-terminus, the 314-residue chain is Very long chain fatty acid elongase 4 (314 aa).

Asn-20 carries N-linked (GlcNAc...) asparagine glycosylation. A run of 7 helical transmembrane segments spans residues 42–62, 78–98, 127–147, 165–185, 188–208, 217–237, and 247–267; these read LMQSPWPTLSISTLYLLFVWL, VLIIYNFGMVLLNFFIFRELF, ALWWYFVSKGVEYLDTVFFIL, MFTLWWIGIKWVAGGQAFFGA, NSFIHVIMYSYYGLAAFGPWI, YLTMLQLVQFHVTIGHTALSL, and MHWALIAYAISFIFLFLNFYI. Positions 274–314 are disordered; the sequence is KKPKTGKTAMNGISANGVSKSEKQLVIENGKKQKNGKAKGD. Residues 293 to 304 are compositionally biased toward basic and acidic residues; the sequence is KSEKQLVIENGK. Positions 305-314 are enriched in basic residues; it reads KQKNGKAKGD. Positions 310–314 match the Di-lysine motif motif; it reads KAKGD.

It belongs to the ELO family. ELOVL4 subfamily. Oligomer. In terms of processing, N-glycosylated. Expressed mainly in retina. Also expressed in skin and thymus.

It is found in the endoplasmic reticulum membrane. It catalyses the reaction a very-long-chain acyl-CoA + malonyl-CoA + H(+) = a very-long-chain 3-oxoacyl-CoA + CO2 + CoA. The catalysed reaction is hexacosanoyl-CoA + malonyl-CoA + H(+) = 3-oxooctacosanyol-CoA + CO2 + CoA. The enzyme catalyses octacosanoyl-CoA + malonyl-CoA + H(+) = 3-oxo-triacontanoyl-CoA + CO2 + CoA. It carries out the reaction triacontanoyl-CoA + malonyl-CoA + H(+) = 3-oxo-dotriacontanoyl-CoA + CO2 + CoA. It catalyses the reaction (19Z,22Z,25Z,28Z,31Z)-tetratriacontapentaenoyl-CoA + malonyl-CoA + H(+) = 3-oxo-(21Z,24Z,27Z,30Z,33Z)-hexatriacontapentaenoyl-CoA + CO2 + CoA. The catalysed reaction is (4Z,7Z,10Z,13Z,16Z,19Z)-docosahexaenoyl-CoA + malonyl-CoA + H(+) = 3-oxo-(6Z,9Z,12Z,15Z,18Z,21Z)-tetracosahexaenoyl-CoA + CO2 + CoA. The enzyme catalyses (7Z,10Z,13Z,16Z)-docosatetraenoyl-CoA + malonyl-CoA + H(+) = (9Z,12Z,15Z,18Z)-3-oxotetracosatetraenoyl-CoA + CO2 + CoA. It carries out the reaction (11Z,14Z,17Z,20Z,23Z)-hexacosapentaenoyl-CoA + malonyl-CoA + H(+) = 3-oxo-(13Z,16Z,19Z,22Z,25Z)-octacosapentaenoyl-CoA + CO2 + CoA. It catalyses the reaction (13Z,16Z,19Z,22Z,25Z)-octacosapentaenoyl-CoA + malonyl-CoA + H(+) = 3-oxo-(15Z,18Z,21Z,24Z,27Z)-triacontapentaenoyl-CoA + CO2 + CoA. The catalysed reaction is (15Z,18Z,21Z,24Z,27Z)-triacontapentaenoyl-CoA + malonyl-CoA + H(+) = 3-oxo-(17Z,20Z,23Z,26Z,29Z)-dotriacontapentaenoyl-CoA + CO2 + CoA. The enzyme catalyses (17Z,20Z,23Z,26Z,29Z)-dotriacontapentaenoyl-CoA + malonyl-CoA + H(+) = 3-oxo-(19Z,22Z,25Z,28Z,31Z)-tetratriacontapentaenoyl-CoA + CO2 + CoA. It carries out the reaction (21Z,24Z,27Z,30Z,33Z)-hexatriacontapentaenoyl-CoA + malonyl-CoA + H(+) = 3-oxo-(23Z,26Z,29Z,32Z,35Z)-octatriacontapentaenoyl-CoA + CO2 + CoA. It catalyses the reaction (11Z,14Z,17Z,20Z)-hexacosatetraenoyl-CoA + malonyl-CoA + H(+) = (13Z,16Z,19Z,22Z)-3-oxooctacosatetraenoyl-CoA + CO2 + CoA. The catalysed reaction is (13Z,16Z,19Z,22Z)-octacosatetraenoyl-CoA + malonyl-CoA + H(+) = 3-oxo-(15Z,18Z,21Z,24Z)-triacontatetraenoyl-CoA + CO2 + CoA. The enzyme catalyses (15Z,18Z,21Z,24Z)-triacontatetraenoyl-CoA + malonyl-CoA + H(+) = 3-oxo-(17Z,20Z,23Z,26Z)-dotriacontatetraenoyl-CoA + CO2 + CoA. It carries out the reaction (17Z,20Z,23Z,26Z)-dotriacontatetraenoyl-CoA + malonyl-CoA + H(+) = 3-oxo-(19Z,22Z,25Z,28Z)-tetratriacontatetraenoyl-CoA + CO2 + CoA. It catalyses the reaction (19Z,22Z,25Z,28Z)-tetratriacontatetraenoyl-CoA + malonyl-CoA + H(+) = 3-oxo-(21Z,24Z,27Z,30Z)-hexatriacontatetraenoyl-CoA + CO2 + CoA. The catalysed reaction is (21Z,24Z,27Z,30Z)-hexatriacontatetraenoyl-CoA + malonyl-CoA + H(+) = 3-oxo-(23Z,26Z,29Z,32Z)-octatriacontatetraenoyl-CoA + CO2 + CoA. The enzyme catalyses (6Z,9Z,12Z,15Z,18Z,21Z)-tetracosahexaenoyl-CoA + malonyl-CoA + H(+) = 3-oxo-(8Z,11Z,14Z,17Z,20Z,23Z)-hexacosahexaenoyl-CoA + CO2 + CoA. It carries out the reaction (8Z,11Z,14Z,17Z,20Z,23Z)-hexacosahexaenoyl-CoA + malonyl-CoA + H(+) = 3-oxo-(10Z,13Z,16Z,19Z,22Z,25Z)-octacosahexaenoyl-CoA + CO2 + CoA. It catalyses the reaction (10Z,13Z,16Z,19Z,22Z,25Z)-octacosahexaenoyl-CoA + malonyl-CoA + H(+) = 3-oxo-(12Z,15Z,18Z,21Z,24Z,27Z)-triacontahexaenoyl-CoA + CO2 + CoA. The catalysed reaction is (12Z,15Z,18Z,21Z,24Z,27Z)-triacontahexaenoyl-CoA + malonyl-CoA + H(+) = 3-oxo-(14Z,17Z,20Z,23Z,26Z,29Z)-dotriacontahexaenoyl-CoA + CO2 + CoA. The enzyme catalyses (14Z,17Z,20Z,23Z,26Z,29Z)-dotriacontahexaenoyl-CoA + malonyl-CoA + H(+) = 3-oxo-(16Z,19Z,22Z,25Z,28Z,31Z)-tetratriacontahexaenoyl-CoA + CO2 + CoA. It carries out the reaction (16Z,19Z,22Z,25Z,28Z,31Z)-tetratriacontahexaenoyl-CoA + malonyl-CoA + H(+) = 3-oxo-(18Z,21Z,24Z,27Z,30Z,33Z)-hexatriacontahexaenoyl-CoA + CO2 + CoA. It catalyses the reaction (9Z,12Z,15Z,18Z,21Z)-tetracosapentaenoyl-CoA + malonyl-CoA + H(+) = 3-oxo-(11Z,14Z,17Z,20Z,23Z)-hexacosapentaenoyl-CoA + CO2 + CoA. Its pathway is lipid metabolism; fatty acid biosynthesis. Catalyzes the first and rate-limiting reaction of the four reactions that constitute the long-chain fatty acids elongation cycle. This endoplasmic reticulum-bound enzymatic process allows the addition of 2 carbons to the chain of long- and very long-chain fatty acids (VLCFAs) per cycle. Condensing enzyme that catalyzes the synthesis of very long chain saturated (VLC-SFA) and polyunsaturated (PUFA) fatty acids that are involved in multiple biological processes as precursors of membrane lipids and lipid mediators. May play a critical role in early brain and skin development. The polypeptide is Very long chain fatty acid elongase 4 (Macaca fascicularis (Crab-eating macaque)).